Consider the following 268-residue polypeptide: Thiazole synthase (268 aa).

Catalysis depends on K111, which acts as the Schiff-base intermediate with DXP. 1-deoxy-D-xylulose 5-phosphate contacts are provided by residues G172, 198-199 (AG), and 220-221 (NT).

It belongs to the ThiG family. Homotetramer. Forms heterodimers with either ThiH or ThiS.

The protein resides in the cytoplasm. It catalyses the reaction [ThiS sulfur-carrier protein]-C-terminal-Gly-aminoethanethioate + 2-iminoacetate + 1-deoxy-D-xylulose 5-phosphate = [ThiS sulfur-carrier protein]-C-terminal Gly-Gly + 2-[(2R,5Z)-2-carboxy-4-methylthiazol-5(2H)-ylidene]ethyl phosphate + 2 H2O + H(+). It participates in cofactor biosynthesis; thiamine diphosphate biosynthesis. In terms of biological role, catalyzes the rearrangement of 1-deoxy-D-xylulose 5-phosphate (DXP) to produce the thiazole phosphate moiety of thiamine. Sulfur is provided by the thiocarboxylate moiety of the carrier protein ThiS. In vitro, sulfur can be provided by H(2)S. In Caulobacter sp. (strain K31), this protein is Thiazole synthase.